A 179-amino-acid chain; its full sequence is Pyridoxal 5'-phosphate synthase subunit PdxT (179 aa).

48–50 (GES) contributes to the L-glutamine binding site. The active-site Nucleophile is the C79. L-glutamine-binding positions include R101 and 127 to 128 (IR). Residues H163 and E165 each act as charge relay system in the active site.

It belongs to the glutaminase PdxT/SNO family. In terms of assembly, in the presence of PdxS, forms a dodecamer of heterodimers. Only shows activity in the heterodimer.

The enzyme catalyses aldehydo-D-ribose 5-phosphate + D-glyceraldehyde 3-phosphate + L-glutamine = pyridoxal 5'-phosphate + L-glutamate + phosphate + 3 H2O + H(+). It catalyses the reaction L-glutamine + H2O = L-glutamate + NH4(+). The protein operates within cofactor biosynthesis; pyridoxal 5'-phosphate biosynthesis. Functionally, catalyzes the hydrolysis of glutamine to glutamate and ammonia as part of the biosynthesis of pyridoxal 5'-phosphate. The resulting ammonia molecule is channeled to the active site of PdxS. The protein is Pyridoxal 5'-phosphate synthase subunit PdxT of Francisella tularensis subsp. tularensis (strain FSC 198).